Consider the following 394-residue polypeptide: Elongation factor Tu (394 aa).

The tr-type G domain maps to 10-204; the sequence is KPHVNVGTIG…ALDSYIPEPE (195 aa). Residues 19 to 26 are G1; sequence GHVDHGKT. 19–26 serves as a coordination point for GTP; that stretch reads GHVDHGKT. Thr26 provides a ligand contact to Mg(2+). The G2 stretch occupies residues 60–64; that stretch reads GITIN. A G3 region spans residues 81–84; it reads DCPG. GTP contacts are provided by residues 81 to 85 and 136 to 139; these read DCPGH and NKCD. The interval 136 to 139 is G4; the sequence is NKCD. The segment at 174 to 176 is G5; the sequence is SAL.

Belongs to the TRAFAC class translation factor GTPase superfamily. Classic translation factor GTPase family. EF-Tu/EF-1A subfamily. Monomer.

The protein localises to the cytoplasm. The catalysed reaction is GTP + H2O = GDP + phosphate + H(+). Its function is as follows. GTP hydrolase that promotes the GTP-dependent binding of aminoacyl-tRNA to the A-site of ribosomes during protein biosynthesis. The polypeptide is Elongation factor Tu (Shewanella sp. (strain ANA-3)).